Here is a 193-residue protein sequence, read N- to C-terminus: Alpha-S2-casein (193 aa).

Residues 1-15 (MKFFIFTCLLAVVLA) form the signal peptide. Ser23, Ser24, Ser25, Ser28, Ser47, Ser68, Ser123, Ser125, Ser128, and Ser136 each carry phosphoserine.

It belongs to the alpha-casein family. Mammary gland specific. Secreted in milk.

It is found in the secreted. Important role in the capacity of milk to transport calcium phosphate. This Camelus dromedarius (Dromedary) protein is Alpha-S2-casein (CSN1S2).